We begin with the raw amino-acid sequence, 102 residues long: Small ribosomal subunit protein uS10 (102 aa).

It belongs to the universal ribosomal protein uS10 family. As to quaternary structure, part of the 30S ribosomal subunit.

Its function is as follows. Involved in the binding of tRNA to the ribosomes. The chain is Small ribosomal subunit protein uS10 from Staphylococcus haemolyticus (strain JCSC1435).